The following is a 424-amino-acid chain: Histidine--tRNA ligase (424 aa).

It belongs to the class-II aminoacyl-tRNA synthetase family. In terms of assembly, homodimer.

It is found in the cytoplasm. The catalysed reaction is tRNA(His) + L-histidine + ATP = L-histidyl-tRNA(His) + AMP + diphosphate + H(+). This is Histidine--tRNA ligase from Sodalis glossinidius (strain morsitans).